Consider the following 229-residue polypeptide: MKIVILLSGGLDSTTVLYLARSLGHDCYALSFNYGQRHKQELAAAIAVAQLAGVIQHQVISFDLGLWGGSALTDYTLDLPQNRAFKEMAEQIPITYVPARNTIFLSFALSYAEAIGATQVYAGMNAIDYSGYPDCRPDYIAAMQEVYRLGTKQGREGEPIQIITPLIDLTKPAIIQLGNRLGVPWAKTWSCYSDGGGNDPPVACGVCDSCRLRLAAFAELSLTDPLPYR.

7-17 (LSGGLDSTTVL) contributes to the ATP binding site. Residues Cys-191, Cys-204, Cys-207, and Cys-210 each coordinate Zn(2+).

It belongs to the QueC family. Zn(2+) serves as cofactor.

The catalysed reaction is 7-carboxy-7-deazaguanine + NH4(+) + ATP = 7-cyano-7-deazaguanine + ADP + phosphate + H2O + H(+). It functions in the pathway purine metabolism; 7-cyano-7-deazaguanine biosynthesis. Its function is as follows. Catalyzes the ATP-dependent conversion of 7-carboxy-7-deazaguanine (CDG) to 7-cyano-7-deazaguanine (preQ(0)). In Cyanothece sp. (strain PCC 7425 / ATCC 29141), this protein is 7-cyano-7-deazaguanine synthase.